A 752-amino-acid polypeptide reads, in one-letter code: DNA topoisomerase 4 subunit A (752 aa).

One can recognise a Topo IIA-type catalytic domain in the interval Leu31–Met494. Catalysis depends on Tyr120, which acts as the O-(5'-phospho-DNA)-tyrosine intermediate. 2 disordered regions span residues Tyr472–His492 and Thr718–Glu752. 2 stretches are compositionally biased toward basic and acidic residues: residues Gly473 to His492 and Gln732 to Arg743.

Belongs to the type II topoisomerase GyrA/ParC subunit family. ParC type 1 subfamily. As to quaternary structure, heterotetramer composed of ParC and ParE.

Its subcellular location is the cell membrane. It carries out the reaction ATP-dependent breakage, passage and rejoining of double-stranded DNA.. Functionally, topoisomerase IV is essential for chromosome segregation. It relaxes supercoiled DNA. Performs the decatenation events required during the replication of a circular DNA molecule. This is DNA topoisomerase 4 subunit A from Escherichia coli O157:H7.